The chain runs to 366 residues: Aminomethyltransferase (366 aa).

The protein belongs to the GcvT family. As to quaternary structure, the glycine cleavage system is composed of four proteins: P, T, L and H.

It catalyses the reaction N(6)-[(R)-S(8)-aminomethyldihydrolipoyl]-L-lysyl-[protein] + (6S)-5,6,7,8-tetrahydrofolate = N(6)-[(R)-dihydrolipoyl]-L-lysyl-[protein] + (6R)-5,10-methylene-5,6,7,8-tetrahydrofolate + NH4(+). Functionally, the glycine cleavage system catalyzes the degradation of glycine. This Bordetella bronchiseptica (strain ATCC BAA-588 / NCTC 13252 / RB50) (Alcaligenes bronchisepticus) protein is Aminomethyltransferase.